Here is a 283-residue protein sequence, read N- to C-terminus: Protein BASIC PENTACYSTEINE5 (283 aa).

Residues 51–86 (AVKERNEAVAATKEALASRDEALEQRDKALSERDNA) are alanine-zipper. Residues 63 to 89 (KEALASRDEALEQRDKALSERDNAIME) adopt a coiled-coil conformation. The disordered stretch occupies residues 122–176 (EESHLPNPSPISTIPPEAANTRPTKRKKESKQGKKMGEDLNRPVASPGKKSRKDW). The segment covering 151–162 (SKQGKKMGEDLN) has biased composition (basic and acidic residues).

It belongs to the BBR/BPC family. Homodimer. Heterodimer. As to expression, expressed in seedlings, leaves and pistils.

Its subcellular location is the nucleus. In terms of biological role, transcriptional regulator that specifically binds to GA-rich elements (GAGA-repeats) present in regulatory sequences of genes involved in developmental processes. The sequence is that of Protein BASIC PENTACYSTEINE5 (BPC5) from Arabidopsis thaliana (Mouse-ear cress).